The chain runs to 915 residues: p53-induced death domain-containing protein 1 (915 aa).

Alanine 2 is modified (N-acetylalanine). LRR repeat units follow at residues 131 to 152 (CLAH…VPEL), 154 to 176 (GLDA…GALP), 177 to 199 (ALTF…GSLS), 200 to 221 (TLQR…IGNL), 223 to 245 (SLSE…AGLR), 246 to 268 (SLRL…VHLP), and 269 to 290 (LITR…LLDA). At serine 304 the chain carries Phosphoserine. 2 ZU5 domains span residues 327–459 (DLDS…VLRP) and 460–601 (VSNT…WYTT). Peptidase S68 stretches follow at residues 428 to 457 (DLET…LVVL) and 571 to 599 (DITT…WLWY). Residues histidine 449, serine 451, histidine 591, and serine 593 contribute to the active site. The interval 585-721 (ARFQVTHFSW…TTALDREAQD (137 aa)) is UPA domain. The Death domain occupies 793-878 (TQSNLLSVAS…DVAEEVRAIL (86 aa)). The disordered stretch occupies residues 888–915 (SIRRTGLAPEDSTLPGTSASQTPESAQA). A compositionally biased stretch (polar residues) spans 901–915 (LPGTSASQTPESAQA).

As to quaternary structure, forms a complex named the PIDDosome with CASP2 and CRADD. Forms a complex with IKBKG and RIPK1. Interacts with FADD and MADD. In terms of processing, undergoes autoproteolytic processing whose extent either directs cells towards survival or apoptotic pathways. Autoproteolytically cleaved into two main fragments PIDD-N and PIDD-C. PIDD-C can be further processed into PIDD-CC, a processing which is enhanced by DNA damage. The cleavage producing PIDD-C is required for translocation of PIDD1 to the nucleus upon DNA damage and activation of NF-kappa-B. PIDD-CC mediates the interaction with CRADD and the cleavage producing PIDD-CC is required for the activation of CASP2. PIDD-N remains associated with PIDD-C and PIDD-CC after cleavage. In terms of tissue distribution, ubiquitous.

It localises to the cytoplasm. The protein resides in the nucleus. Functionally, component of the DNA damage/stress response pathway that functions downstream of p53/TP53 and can either promote cell survival or apoptosis. Associated with CRADD and the CASP2 caspase, it forms the PIDDosome a complex that activates CASP2 and triggers apoptosis. Associated with IKBKG and RIPK1, it enhances sumoylation and ubiquitination of IKBKG which is important for activation of the transcription factor NF-kappa-B. The polypeptide is p53-induced death domain-containing protein 1 (Mus musculus (Mouse)).